A 417-amino-acid chain; its full sequence is Origin of replication complex subunit 4 (417 aa).

Position 59 to 66 (59 to 66 (GPRGSGKA)) interacts with ATP.

This sequence belongs to the ORC4 family. In terms of assembly, component of the origin recognition complex (ORC) composed of at least ORC1 (ORC1A or ORC1B), ORC2, ORC3, ORC4, ORC5 and ORC6. ORC is regulated in a cell-cycle and development dependent manner. It is sequentially assembled at the exit from anaphase of mitosis and disassembled as cells enter S phase. Interacts directly with ORC1A, ORC2, ORC3, ORC5 and ORC6. As to expression, follow a cell-cycle regulation with a peak at the G1/S-phase. Isoform AtORC4a is expressed at low levels ubiquitously. Isoform AtORC4b is mostly expressed in siliques, flowers and flower buds, and, to a lower exent, in roots, leaves and stems.

The protein localises to the nucleus. In terms of biological role, component of the origin recognition complex (ORC) that binds origins of replication. DNA-binding is ATP-dependent. The specific DNA sequences that define origins of replication have not been identified yet. ORC is required to assemble the pre-replication complex necessary to initiate DNA replication. In Arabidopsis thaliana (Mouse-ear cress), this protein is Origin of replication complex subunit 4.